The primary structure comprises 28 residues: Taicatoxin, alpha-neurotoxin-like component (28 aa).

Cys3 and Cys21 are oxidised to a cystine.

The protein belongs to the three-finger toxin family. Long-chain subfamily. Type II alpha-neurotoxin sub-subfamily. As to quaternary structure, heterotrimer composed of this alpha-neurotoxin-like peptide of 8 kDa, a neurotoxic phospholipase of 16 kDa (AC Q7LZG2) and a serine protease inhibitor of 7 kDa (AC B7S4N9) at an approximate stoichiometry of 1:1:4; non-covalently linked. As to expression, expressed by the venom gland.

It localises to the secreted. In terms of biological role, the heterotrimer blocks the voltage-dependent L-type calcium channels (Cav1/CACNA1) from the heart, and the small conductance calcium-activated potassium channels (KCa2/KCNN) in the chromaffin cells and in the brain. Is very toxic to mice. The chain is Taicatoxin, alpha-neurotoxin-like component from Oxyuranus scutellatus scutellatus (Australian taipan).